The following is a 258-amino-acid chain: UPF0246 protein Pnuc_0753 (258 aa).

Belongs to the UPF0246 family.

The protein is UPF0246 protein Pnuc_0753 of Polynucleobacter asymbioticus (strain DSM 18221 / CIP 109841 / QLW-P1DMWA-1) (Polynucleobacter necessarius subsp. asymbioticus).